Here is a 153-residue protein sequence, read N- to C-terminus: Penitrem biosynthesis cluster 1 protein I (153 aa).

Its pathway is secondary metabolite biosynthesis. Functionally, part of the gene cluster that mediates the biosynthesis of the indole diterpenes penitrems. The geranylgeranyl diphosphate (GGPP) synthase ptmG catalyzes the first step in penitrem biosynthesis via conversion of farnesyl pyrophosphate and isopentyl pyrophosphate into geranylgeranyl pyrophosphate (GGPP). Condensation of indole-3-glycerol phosphate with GGPP by the prenyl transferase ptmC then forms 3-geranylgeranylindole (3-GGI). Epoxidation by the FAD-dependent monooxygenase ptmM leads to a epoxidized-GGI that is substrate of the terpene cyclase ptmB for cyclization to yield paspaline. Paspaline is subsequently converted to 13-desoxypaxilline by the cytochrome P450 monooxygenase ptmP, the latter being then converted to paxilline by the cytochrome P450 monooxygenase ptmQ. Paxilline is converted to beta-paxitriol via C-10 ketoreduction by the short-chain dehydrogenase ptmH which can be monoprenylated at the C-20 by the indole diterpene prenyltransferase ptmD. A two-step elimination (acetylation and elimination) process performed by the O-acetyltransferase ptmV and ptmI leads to the production of the prenylated form of penijanthine. The FAD-linked oxidoreductase ptmO then converts the prenylated form of penijanthine into PC-M5 which is in turn transformed into PC-M4 by the aromatic dimethylallyltransferase ptmE. Five sequential oxidative transformations performed by the cytochrome P450 monooxygenases ptmK, ptmU, ptmL, ptmN and ptmJ yield the various penitrem compounds. PtmK, ptmU and ptmM are involved in the formation of the key bicyclic ring of penitrem C via the formation of the intermediates secopenitrem D and penitrem D. PtmL catalyzes the epoxidation of penitrem D and C to yield penitrem B and F, respectively. PtmJ catalyzes the last benzylic hydroxylation to convert penitrem B to prenitrem E and penitrem F to penitrem A. The polypeptide is Penitrem biosynthesis cluster 1 protein I (Penicillium ochrochloron).